The chain runs to 338 residues: Glycerol-3-phosphate dehydrogenase [NAD(P)+] (338 aa).

Positions 12, 13, 34, and 110 each coordinate NADPH. Residues Lys110, Gly141, and Ser143 each contribute to the sn-glycerol 3-phosphate site. NADPH is bound at residue Ala145. Sn-glycerol 3-phosphate-binding residues include Lys196, Asp249, Ser259, Arg260, and Asn261. Lys196 (proton acceptor) is an active-site residue. Arg260 serves as a coordination point for NADPH. NADPH contacts are provided by Val284 and Glu286.

It belongs to the NAD-dependent glycerol-3-phosphate dehydrogenase family.

The protein localises to the cytoplasm. It catalyses the reaction sn-glycerol 3-phosphate + NAD(+) = dihydroxyacetone phosphate + NADH + H(+). It carries out the reaction sn-glycerol 3-phosphate + NADP(+) = dihydroxyacetone phosphate + NADPH + H(+). The protein operates within membrane lipid metabolism; glycerophospholipid metabolism. Functionally, catalyzes the reduction of the glycolytic intermediate dihydroxyacetone phosphate (DHAP) to sn-glycerol 3-phosphate (G3P), the key precursor for phospholipid synthesis. This is Glycerol-3-phosphate dehydrogenase [NAD(P)+] from Ligilactobacillus salivarius (strain UCC118) (Lactobacillus salivarius).